We begin with the raw amino-acid sequence, 634 residues long: Sodium-dependent neutral amino acid transporter B(0)AT1 (634 aa).

Over 1–41 (MVRLVLPNPGLEERIPSLDELEVIEKEEAGSRPKWDNKAQY) the chain is Cytoplasmic. Serine 17 is subject to Phosphoserine. A helical membrane pass occupies residues 42 to 62 (MLTCVGFCVGLGNVWRFPYLC). At 63-67 (QSHGG) the chain is on the extracellular side. A helical transmembrane segment spans residues 68-88 (GAFMIPFLILLVFEGIPLLYL). Residues 89–119 (EFAIGQRLRKGSMGVWSSIHPALKGIGIASM) lie on the Cytoplasmic side of the membrane. A helical membrane pass occupies residues 120–140 (FVSFMVGLYYNTIIAWVMWYF). Over 141–192 (FNSFQEPLPWSECPLNQNQTGYVEECAKSSSVDYFWYRETLNISTSISDSGS) the chain is Extracellular. Asparagine 158 and asparagine 182 each carry an N-linked (GlcNAc...) asparagine glycan. The chain crosses the membrane as a helical span at residues 193–213 (IQWWILLCLTCAWSVLYVCII). The Cytoplasmic portion of the chain corresponds to 214-221 (RGIETTGK). The helical transmembrane segment at 222-242 (AVYITSTLPYVVLTIFLIRGL) threads the bilayer. Over 243 to 268 (TLKGATNGIVFLFTPNITELSNPNTW) the chain is Extracellular. Asparagine 258 carries an N-linked (GlcNAc...) asparagine glycan. The helical transmembrane segment at 269–289 (LDAGAQVFYSFSLAFGGLISF) threads the bilayer. Topologically, residues 290–304 (SSYNSVHNNCEMDSV) are cytoplasmic. The chain crosses the membrane as a helical span at residues 305-325 (IVSVINGFTSVYAATVVYSII). Topologically, residues 326-413 (GFRATERFDD…TEAITKMPVS (88 aa)) are extracellular. Residues asparagine 354 and asparagine 368 are each glycosylated (N-linked (GlcNAc...) asparagine). A helical membrane pass occupies residues 414-434 (PLWSVLFFIMLFCLGLSSMFG). The Cytoplasmic segment spans residues 435–456 (NMEGVVVPLQDLNITPKKWPKE). Residues 457 to 477 (LLTGLICLGTYLIAFIFTLNS) form a helical membrane-spanning segment. Over 478-487 (GQYWLSLLDS) the chain is Extracellular. Residues 488 to 508 (FAGSIPLLIIAFCEMFAVVYV) traverse the membrane as a helical segment. At 509-531 (YGVDRFNKDIEFMIGHKPNIFWQ) the chain is on the cytoplasmic side. The chain crosses the membrane as a helical span at residues 532–552 (VTWRVVSPLIMLVIFLFFFVI). Over 553–581 (EVNKTLMYSIWDPNYEEFPKSQKIPYPNW) the chain is Extracellular. An N-linked (GlcNAc...) asparagine glycan is attached at asparagine 555. The chain crosses the membrane as a helical span at residues 582-602 (VYAVVVTVAGVPCLSIPCFAI). The Cytoplasmic portion of the chain corresponds to 603 to 634 (YKFIRNCCQKSDDHHGLVNTLSTASVNGDLKN). Serine 627 is subject to Phosphoserine.

Belongs to the sodium:neurotransmitter symporter (SNF) (TC 2.A.22) family. SLC6A19 subfamily. As to quaternary structure, interacts in a tissue-specific manner with ACE2 in small intestine and with CLTRN in the kidney. Interacts with CLTRN; this interaction is required for trafficking of SLC6A19 to the plasma membrane and for its catalytic activation in kidneys. Interacts with ACE2; this interaction is required for trafficking of SLC6A19 to the plasma membrane and for its catalytic activation in intestine. Interacts with ANPEP; the interaction positively regulates its amino acid transporter activity. As to expression, predominantly expressed in kidney and small intestine (at protein level). Expressed in the intestinal brush border (at protein level). Expression not observed in other organs, such as lung, skeletal muscle, brain, liver and pancreas. In kidney, expression is localized in the renal cortex but not in the medulla. Substantial amounts of expression in the proximal tubules. The distal nephron segments and the glomeruli are consistently negative. In the small intestine, expression is exclusively localized in villus enterocytes. High resolution of the hybridization-positive villi reveals a gradient of expression with the highest levels in apical cells. Not detected in crypt cells or in any other cell types of the small intestine.

It localises to the cell membrane. The catalysed reaction is L-alanine(in) + Na(+)(in) = L-alanine(out) + Na(+)(out). The enzyme catalyses L-cysteine(in) + Na(+)(in) = L-cysteine(out) + Na(+)(out). It carries out the reaction L-glutamine(in) + Na(+)(in) = L-glutamine(out) + Na(+)(out). It catalyses the reaction glycine(in) + Na(+)(in) = glycine(out) + Na(+)(out). The catalysed reaction is L-isoleucine(in) + Na(+)(in) = L-isoleucine(out) + Na(+)(out). The enzyme catalyses L-leucine(in) + Na(+)(in) = L-leucine(out) + Na(+)(out). It carries out the reaction L-methionine(in) + Na(+)(in) = L-methionine(out) + Na(+)(out). It catalyses the reaction L-phenylalanine(in) + Na(+)(in) = L-phenylalanine(out) + Na(+)(out). The catalysed reaction is L-serine(in) + Na(+)(in) = L-serine(out) + Na(+)(out). The enzyme catalyses L-tryptophan(in) + Na(+)(in) = L-tryptophan(out) + Na(+)(out). It carries out the reaction L-tyrosine(in) + Na(+)(in) = L-tyrosine(out) + Na(+)(out). It catalyses the reaction L-valine(in) + Na(+)(in) = L-valine(out) + Na(+)(out). Its function is as follows. Transporter that mediates resorption of neutral amino acids across the apical membrane of renal and intestinal epithelial cells. This uptake is sodium-dependent and chloride-independent. Requires CLTRN in kidney or ACE2 in intestine for cell surface expression and amino acid transporter activity. The chain is Sodium-dependent neutral amino acid transporter B(0)AT1 (Slc6a19) from Mus musculus (Mouse).